The primary structure comprises 124 residues: MRASPCISQPAASWHPRPSALRPTAGSGPDTRTPGTVEDGSAPCPAFRSPAVSPCGEEPCCFQISPAEETLELGRLVSPGNCDTLSPRAAGFYACHVRSLIPCRSTKGRWPLTASAAGLSSFSG.

A compositionally biased stretch (polar residues) spans 1-11 (MRASPCISQPA). The interval 1-42 (MRASPCISQPAASWHPRPSALRPTAGSGPDTRTPGTVEDGSA) is disordered.

As to expression, strongly expressed in testis. Weakly expressed in heart, placenta and skeletal muscle.

It localises to the cytoplasm. The protein resides in the nucleus. Its function is as follows. May play a significant role in p53/TP53-mediating signaling pathway. The protein is TP53-target gene 3 protein of Homo sapiens (Human).